The primary structure comprises 99 residues: MENNNIMSQVKEIIEAAIKELEDDGFEPDIILAGPIFIRYLPEDVRLKVYEIEELGSDAIIADSKYLGQIKKAAKRISIDPLLQEKEWEKIIEEIPTQE.

This sequence belongs to the encapsulin family. Family 4B subfamily. In terms of assembly, may self-assemble into facets and potentially into larger complexes.

It localises to the encapsulin nanocompartment. May be the encapsulin shell protein in a type 4 A-domain encapsulin nanocompartment system. Its cargo may be upstream glyceraldehyde-3-phosphate dehydrogenase (AC P61879). This is Putative type 4B encapsulin shell protein PF1875 from Pyrococcus furiosus (strain ATCC 43587 / DSM 3638 / JCM 8422 / Vc1).